The chain runs to 357 residues: Protein pelota homolog (357 aa).

This sequence belongs to the eukaryotic release factor 1 family. Pelota subfamily. Monomer. Requires a divalent metal cation as cofactor.

The protein localises to the cytoplasm. Functionally, may function in recognizing stalled ribosomes, interact with stem-loop structures in stalled mRNA molecules, and effect endonucleolytic cleavage of the mRNA. May play a role in the release non-functional ribosomes and degradation of damaged mRNAs. Has endoribonuclease activity. This chain is Protein pelota homolog, found in Thermococcus gammatolerans (strain DSM 15229 / JCM 11827 / EJ3).